Here is a 766-residue protein sequence, read N- to C-terminus: MNIRYLLLLSLMPHLVWAAEEPTPEIPFSQCLIEPPVSRSFDDRAQLTDIDPNDIVIISDRTDASFNKQAHFDGDVSFSQGQRHIAADKATLDQRQQQLSATGNLIFKDENITVTADTLEAQMSSNSATLDNTQYWLHGQQVHGKASKMQITSENNLLLSNANFTTCPPGDESWLLEAELIKIDSKEEWGEIWNAKLRIADVPVLYIPYMTVPVSDKRKTGFLFPNFSTSTTNGVQVSTPYYWNIAPEYDLTFTPDMMSSRGLFTKTQVNYLAGEAQQGQVNFEYLDNDNKLAGSPNRYLYNMSHQGAINDNWRVQANFTDVSDNNYFNDLNSDVNRSTDNQLSRIGETSYFERNWDMSVRVQDIKVLGESEKPYQVMPQLNFNYRVADIWQAIDFNFNSELTNFEHQDDNRNTATRIHLVPSLVWPIQGPAGSFTSELKLLQTQFFQQTQDSNNPYNQDVSRTIPQLRLHGKVNFERPANIWGEAYRQTIEPQVQYLYVGYEDQSNIGFYDTAQLQDDYFGLFRDRRFSGHDRIADANQATVGLTSRLLDASNREQFKFSIGQTLYIEDSKVLLNQGLRDAQQSASVLAAELDARLYQDWFISGAVQHDTEHGKNKKSEVTLDYRPSNDKLLQFSYRFVPDLLNTNTNGRVNISQMGVRTSWPLTDSLYFVGNWYHDLKEERDVETYTGIQYESCCWAVRLSYHYRIKTNYDDELMASIDNREEFEKGVYLNFVIKGLGGSGPLGVSDMLDEGLFNYRKPLYLRN.

The first 18 residues, 1 to 18, serve as a signal peptide directing secretion; the sequence is MNIRYLLLLSLMPHLVWA.

It belongs to the LptD family. As to quaternary structure, component of the lipopolysaccharide transport and assembly complex. Interacts with LptE and LptA.

It localises to the cell outer membrane. In terms of biological role, together with LptE, is involved in the assembly of lipopolysaccharide (LPS) at the surface of the outer membrane. This is LPS-assembly protein LptD from Shewanella denitrificans (strain OS217 / ATCC BAA-1090 / DSM 15013).